A 315-amino-acid polypeptide reads, in one-letter code: Putative 2-hydroxyacid dehydrogenase HI_1556 (315 aa).

NAD(+)-binding positions include Thr-73, 156–157 (CL), 231–233 (TGR), and Asp-257. The active site involves Arg-233. Glu-262 is a catalytic residue. The active-site Proton donor is His-285. 285 to 288 (HIAW) contributes to the NAD(+) binding site.

It belongs to the D-isomer specific 2-hydroxyacid dehydrogenase family.

The protein is Putative 2-hydroxyacid dehydrogenase HI_1556 of Haemophilus influenzae (strain ATCC 51907 / DSM 11121 / KW20 / Rd).